Reading from the N-terminus, the 346-residue chain is Very-long-chain 3-oxoacyl-CoA reductase (346 aa).

The chain crosses the membrane as a helical span at residues 19–39 (VLLGALLVGVFKLTVFILSVT). 7 residues coordinate NADP(+): Val65, Asp119, Asn146, Tyr220, Lys224, Val253, and Ser255. Tyr220 serves as the catalytic Proton donor. Lys224 serves as the catalytic Lowers pKa of active site Tyr.

This sequence belongs to the short-chain dehydrogenases/reductases (SDR) family.

The protein localises to the endoplasmic reticulum membrane. It carries out the reaction a very-long-chain (3R)-3-hydroxyacyl-CoA + NADP(+) = a very-long-chain 3-oxoacyl-CoA + NADPH + H(+). Its pathway is lipid metabolism; fatty acid biosynthesis. In terms of biological role, component of the microsomal membrane bound fatty acid elongation system, which produces the 26-carbon very long-chain fatty acids (VLCFA) from palmitate. Catalyzes the reduction of the 3-ketoacyl-CoA intermediate that is formed in each cycle of fatty acid elongation. VLCFAs serve as precursors for ceramide and sphingolipids. The polypeptide is Very-long-chain 3-oxoacyl-CoA reductase (Scheffersomyces stipitis (strain ATCC 58785 / CBS 6054 / NBRC 10063 / NRRL Y-11545) (Yeast)).